Consider the following 184-residue polypeptide: Ribosome-recycling factor (184 aa).

Belongs to the RRF family.

The protein resides in the cytoplasm. Functionally, responsible for the release of ribosomes from messenger RNA at the termination of protein biosynthesis. May increase the efficiency of translation by recycling ribosomes from one round of translation to another. This chain is Ribosome-recycling factor, found in Bifidobacterium animalis subsp. lactis (strain AD011).